The following is a 296-amino-acid chain: Heme oxygenase 1 (296 aa).

Residues 1–273 are Cytoplasmic-facing; it reads METSQPHNAE…RMQADMLTTS (273 aa). 4 residues coordinate heme b: lysine 21, histidine 28, tyrosine 137, and arginine 186. The disordered stretch occupies residues 231 to 264; the sequence is GHAVQPKAELRTRSVNKSHENSPAAGKESERTSR. A compositionally biased stretch (basic and acidic residues) spans 238-250; that stretch reads AELRTRSVNKSHE. The chain crosses the membrane as a helical; Anchor for type IV membrane protein span at residues 274 to 296; the sequence is PLVRWLLALGFIATTVAVGLFAM.

Belongs to the heme oxygenase family. Homodimer and higher order homooligomer. Oligomerization is crucial for its stability and function in the endoplasmic reticulum. In terms of processing, a soluble form arises by proteolytic removal of the membrane anchor.

The protein localises to the endoplasmic reticulum membrane. The enzyme catalyses heme b + 3 reduced [NADPH--hemoprotein reductase] + 3 O2 = biliverdin IXalpha + CO + Fe(2+) + 3 oxidized [NADPH--hemoprotein reductase] + 3 H2O + H(+). Its activity is regulated as follows. Inhibited by metalloporphyrins in the following order of decreasing potency: tin mesoporphyrin &gt; tin protoporphyrin &gt; zinc protoporphyrin &gt; manganese protoporphyrin &gt; cobalt protoporphyrin. Functionally, catalyzes the oxidative cleavage of heme at the alpha-methene bridge carbon, released as carbon monoxide (CO), to generate biliverdin IXalpha, while releasing the central heme iron chelate as ferrous iron. Affords protection against programmed cell death and this cytoprotective effect relies on its ability to catabolize free heme and prevent it from sensitizing cells to undergo apoptosis. Its function is as follows. Catalyzes the oxidative cleavage of heme at the alpha-methene bridge carbon, released as carbon monoxide (CO), to generate biliverdin IXalpha, while releasing the central heme iron chelate as ferrous iron. The sequence is that of Heme oxygenase 1 (HMOX1) from Gallus gallus (Chicken).